Reading from the N-terminus, the 31-residue chain is MESAAYILVLALALGVIFFAIAFRDPPRIGK.

Residues 3–23 traverse the membrane as a helical segment; sequence SAAYILVLALALGVIFFAIAF.

It belongs to the PsbT family. PSII is composed of 1 copy each of membrane proteins PsbA, PsbB, PsbC, PsbD, PsbE, PsbF, PsbH, PsbI, PsbJ, PsbK, PsbL, PsbM, PsbT, PsbX, PsbY, PsbZ, Psb30/Ycf12, peripheral proteins PsbO, CyanoQ (PsbQ), PsbU, PsbV and a large number of cofactors. It forms dimeric complexes.

The protein resides in the cellular thylakoid membrane. In terms of biological role, found at the monomer-monomer interface of the photosystem II (PS II) dimer, plays a role in assembly and dimerization of PSII. PSII is a light-driven water plastoquinone oxidoreductase, using light energy to abstract electrons from H(2)O, generating a proton gradient subsequently used for ATP formation. In Trichodesmium erythraeum (strain IMS101), this protein is Photosystem II reaction center protein T.